A 285-amino-acid polypeptide reads, in one-letter code: Tumor necrosis factor ligand superfamily member 13B (285 aa).

At 1–46 (MDDSTEREQSRLTSCLKKREEMKLKECVSILPRKESPSVRSSKDGK) the chain is on the cytoplasmic side. The chain crosses the membrane as a helical; Signal-anchor for type II membrane protein span at residues 47 to 67 (LLAATLLLALLSCCLTVVSFY). At 68–285 (QVAALQGDLA…VTFFGALKLL (218 aa)) the chain is on the extracellular side. The interval 114-138 (IFEPPAPGEGNSSQNSRNKRAVQGP) is disordered. N-linked (GlcNAc...) asparagine glycosylation is present at asparagine 124. In terms of domain architecture, THD spans 145–284 (DCLQLIADSE…DVTFFGALKL (140 aa)). A disulfide bond links cysteine 232 and cysteine 245. An N-linked (GlcNAc...) (high mannose) asparagine glycan is attached at asparagine 242.

Belongs to the tumor necrosis factor family. In terms of assembly, homotrimer. Isoform 2 heteromultimerizes with isoform 1, probably limiting the amount of functional isoform 1 on the cell surface. Isoform 3 is unlikely form trimers or bind to BAFF receptors. Post-translationally, the soluble form derives from the membrane form by proteolytic processing. In terms of processing, isoform 2 is not efficiently shed from the membrane unlike isoform 1. N-glycosylated. Abundantly expressed in peripheral blood Leukocytes and is specifically expressed in monocytes and macrophages. Also found in the spleen, lymph node, bone marrow, T-cells and dendritic cells. A lower expression seen in placenta, heart, lung, fetal liver, thymus, and pancreas. Isoform 2 is expressed in many myeloid cell lines.

It is found in the cell membrane. The protein resides in the secreted. In terms of biological role, cytokine that binds to TNFRSF13B/TACI and TNFRSF17/BCMA. TNFSF13/APRIL binds to the same 2 receptors. Together, they form a 2 ligands -2 receptors pathway involved in the stimulation of B- and T-cell function and the regulation of humoral immunity. A third B-cell specific BAFF-receptor (BAFFR/BR3) promotes the survival of mature B-cells and the B-cell response. Its function is as follows. Isoform 2 seems to inhibit isoform 1 secretion and bioactivity. Functionally, acts as a transcription factor for its own parent gene, in association with NF-kappa-B p50 subunit, at least in autoimmune and proliferative B-cell diseases. The presence of Delta4BAFF is essential for soluble BAFF release by IFNG/IFN-gamma-stimulated monocytes and for B-cell survival. It can directly or indirectly regulate the differential expression of a large number of genes involved in the innate immune response and the regulation of apoptosis. In Homo sapiens (Human), this protein is Tumor necrosis factor ligand superfamily member 13B (TNFSF13B).